The sequence spans 247 residues: Ubiquinone biosynthesis O-methyltransferase (247 aa).

S-adenosyl-L-methionine is bound by residues Arg39, Gly70, Asp91, and Met134.

The protein belongs to the methyltransferase superfamily. UbiG/COQ3 family.

It carries out the reaction a 3-demethylubiquinol + S-adenosyl-L-methionine = a ubiquinol + S-adenosyl-L-homocysteine + H(+). The catalysed reaction is a 3-(all-trans-polyprenyl)benzene-1,2-diol + S-adenosyl-L-methionine = a 2-methoxy-6-(all-trans-polyprenyl)phenol + S-adenosyl-L-homocysteine + H(+). Its pathway is cofactor biosynthesis; ubiquinone biosynthesis. Its function is as follows. O-methyltransferase that catalyzes the 2 O-methylation steps in the ubiquinone biosynthetic pathway. The chain is Ubiquinone biosynthesis O-methyltransferase from Cereibacter sphaeroides (strain ATCC 17023 / DSM 158 / JCM 6121 / CCUG 31486 / LMG 2827 / NBRC 12203 / NCIMB 8253 / ATH 2.4.1.) (Rhodobacter sphaeroides).